The sequence spans 298 residues: Nucleotide-binding protein GK3066 (298 aa).

17–24 provides a ligand contact to ATP; the sequence is GMSGAGKT. 68–71 contacts GTP; sequence DLRS.

Belongs to the RapZ-like family.

Displays ATPase and GTPase activities. In Geobacillus kaustophilus (strain HTA426), this protein is Nucleotide-binding protein GK3066.